The primary structure comprises 234 residues: 1-(5-phosphoribosyl)-5-[(5-phosphoribosylamino)methylideneamino] imidazole-4-carboxamide isomerase (234 aa).

Catalysis depends on aspartate 9, which acts as the Proton acceptor. The Proton donor role is filled by aspartate 131.

This sequence belongs to the HisA/HisF family.

Its subcellular location is the cytoplasm. The enzyme catalyses 1-(5-phospho-beta-D-ribosyl)-5-[(5-phospho-beta-D-ribosylamino)methylideneamino]imidazole-4-carboxamide = 5-[(5-phospho-1-deoxy-D-ribulos-1-ylimino)methylamino]-1-(5-phospho-beta-D-ribosyl)imidazole-4-carboxamide. Its pathway is amino-acid biosynthesis; L-histidine biosynthesis; L-histidine from 5-phospho-alpha-D-ribose 1-diphosphate: step 4/9. This chain is 1-(5-phosphoribosyl)-5-[(5-phosphoribosylamino)methylideneamino] imidazole-4-carboxamide isomerase, found in Staphylococcus epidermidis (strain ATCC 35984 / DSM 28319 / BCRC 17069 / CCUG 31568 / BM 3577 / RP62A).